The chain runs to 37 residues: MKVRASVKRICDKCKVIRRHGRVYVICENPKHKQRQG.

This sequence belongs to the bacterial ribosomal protein bL36 family.

This chain is Large ribosomal subunit protein bL36, found in Thermus thermophilus (strain ATCC BAA-163 / DSM 7039 / HB27).